Reading from the N-terminus, the 199-residue chain is Acireductone dioxygenase 2 (199 aa).

The Fe(2+) site is built by H98, H100, E104, and H143. Residues H98, H100, E104, and H143 each coordinate Ni(2+).

This sequence belongs to the acireductone dioxygenase (ARD) family. Fe(2+) is required as a cofactor. Ni(2+) serves as cofactor.

It is found in the cytoplasm. It localises to the nucleus. It carries out the reaction 1,2-dihydroxy-5-(methylsulfanyl)pent-1-en-3-one + O2 = 4-methylsulfanyl-2-oxobutanoate + formate + 2 H(+). The enzyme catalyses 1,2-dihydroxy-5-(methylsulfanyl)pent-1-en-3-one + O2 = 3-(methylsulfanyl)propanoate + CO + formate + 2 H(+). Its pathway is amino-acid biosynthesis; L-methionine biosynthesis via salvage pathway; L-methionine from S-methyl-5-thio-alpha-D-ribose 1-phosphate: step 5/6. Its function is as follows. Catalyzes 2 different reactions between oxygen and the acireductone 1,2-dihydroxy-3-keto-5-methylthiopentene (DHK-MTPene) depending upon the metal bound in the active site. Fe-containing acireductone dioxygenase (Fe-ARD) produces formate and 2-keto-4-methylthiobutyrate (KMTB), the alpha-ketoacid precursor of methionine in the methionine recycle pathway. Ni-containing acireductone dioxygenase (Ni-ARD) produces methylthiopropionate, carbon monoxide and formate, and does not lie on the methionine recycle pathway. In Vitis vinifera (Grape), this protein is Acireductone dioxygenase 2.